Consider the following 1169-residue polypeptide: Rabankyrin-5 (1169 aa).

A2 bears the N-acetylalanine mark. The BTB domain maps to 68-130; it reads SDLKIKVGDR…IYTDELEFRE (63 aa). 5 ANK repeats span residues 217 to 247, 255 to 284, 288 to 317, 322 to 362, and 366 to 396; these read KTEYPLHKAIKVEREDVVFLYLIEMDSQLPG, NGDLALDLALSRRLESIATTLVSHKADVDM, SGWSLLHKGIQRGDLFAATFLIKNGAFVNA, AQET…NPNM, and KGRTPLHVSIMAGNEYVFSQLLQCKQLDLEL. The residue at position 270 (S270) is a Phosphoserine. An NPF motif is present at residues 421-423; sequence NPF. ANK repeat units lie at residues 490 to 519, 542 to 572, 588 to 617, 621 to 650, 654 to 683, 687 to 716, 724 to 753, 769 to 798, 802 to 832, 836 to 865, 870 to 899, 905 to 934, 938 to 967, 971 to 1001, 1005 to 1037, and 1043 to 1072; these read WGETPLHTACRHGLANLTAELLQQGANPNL, HLQTPLHMAIAYNHPDVVSVILEQKANALHA, RDQTVLGLALWTGMHTIAAQLLGSGAAIND, DGQTLLHMAIQRQDSKSALFLLEHQADINV, DGETALQLAIRNQLPLVVDAICTRGADMSV, KGNPPLWLALANNLEDIASTLVRHGCDATC, CLQTLLHRAIDENNEPTACFLIRSGCDVNS, DGQTPLHLAASWGLEETVQCLLEFGANVNA, EGRTPIHVAISSQHGVIIQLLVSHPDIHLNV, QGLTPFACAMTFKNNKSAEAILKRESGAAE, KGRNFLHVAVQNSDIESVLFLISVHANVNS, SKLTPLHLAVQAGSEIIVRNLLLAGAKVNE, HRQTALHLAAQQDLPTICSVLLENGVDFAA, NGNNALHLAVMHGRLNNIRVLLTECTVDAEA, RGQSPLHILGQYGKENAAAIFDLFLECMPGYPL, and DGSTVLLLAYMKGNANLCRAIVRSGARLGV. The interval 650-759 is interaction with RHOD and RAB5A; that stretch reads VRTQDGETAL…DVNSPRQPGA (110 aa). The FYVE-type zinc-finger motif lies at 1104–1164; sequence WCDGSYCYEC…VCNICFDVLT (61 aa). The Zn(2+) site is built by C1110, C1113, C1126, C1129, C1134, C1137, C1156, and C1159.

In terms of assembly, interacts with RAB5A (in GTP-bound form). Interacts with RHOD (independent of GTP-loaded status). Interacts with EHD1. Interacts with VPS26A; the interaction is independent of EHD1 and is indicative for an association with the cargo recognition subcomplex of the retromer complex. In terms of tissue distribution, high expression in whole adult brain and intermediate expression in all other tissues and specific brain regions examined, including fetal brain.

The protein resides in the cytoplasm. The protein localises to the endosome membrane. It localises to the early endosome. Its function is as follows. Proposed effector of Rab5. Binds to phosphatidylinositol 3-phosphate (PI(3)P). Involved in homotypic early endosome fusion and to a lesser extent in heterotypic fusion of chlathrin-coated vesicles with early endosomes. Involved in macropinocytosis; the function is dependent on Rab5-GTP. Required for correct endosomal localization. Involved in the internalization and trafficking of activated tyrosine kinase receptors such as PDGFRB. Regulates the subcellular localization of the retromer complex in a EHD1-dependent manner. Involved in endosome-to-Golgi transport and biosynthetic transport to late endosomes and lysosomes indicative for a regulation of retromer complex-mediated retrograde transport. This Homo sapiens (Human) protein is Rabankyrin-5 (ANKFY1).